The primary structure comprises 225 residues: NAD(P)H-quinone oxidoreductase subunit K, chloroplastic (225 aa).

4 residues coordinate [4Fe-4S] cluster: Cys-43, Cys-44, Cys-108, and Cys-139.

It belongs to the complex I 20 kDa subunit family. NDH is composed of at least 16 different subunits, 5 of which are encoded in the nucleus. [4Fe-4S] cluster is required as a cofactor.

It is found in the plastid. The protein resides in the chloroplast thylakoid membrane. It carries out the reaction a plastoquinone + NADH + (n+1) H(+)(in) = a plastoquinol + NAD(+) + n H(+)(out). It catalyses the reaction a plastoquinone + NADPH + (n+1) H(+)(in) = a plastoquinol + NADP(+) + n H(+)(out). NDH shuttles electrons from NAD(P)H:plastoquinone, via FMN and iron-sulfur (Fe-S) centers, to quinones in the photosynthetic chain and possibly in a chloroplast respiratory chain. The immediate electron acceptor for the enzyme in this species is believed to be plastoquinone. Couples the redox reaction to proton translocation, and thus conserves the redox energy in a proton gradient. The chain is NAD(P)H-quinone oxidoreductase subunit K, chloroplastic from Arabidopsis thaliana (Mouse-ear cress).